The chain runs to 287 residues: 4-hydroxybenzoate octaprenyltransferase (287 aa).

7 helical membrane passes run 30–50 (ALWI…FALG), 92–112 (IAIA…LNGL), 133–153 (FFAI…PMAF), 158–178 (DTVP…SVAY), 207–227 (VLAI…LGAA), 232–252 (WPYW…YTLI), and 266–286 (HNNW…ALAV).

This sequence belongs to the UbiA prenyltransferase family. Requires Mg(2+) as cofactor.

The protein localises to the cell inner membrane. It carries out the reaction all-trans-octaprenyl diphosphate + 4-hydroxybenzoate = 4-hydroxy-3-(all-trans-octaprenyl)benzoate + diphosphate. It participates in cofactor biosynthesis; ubiquinone biosynthesis. In terms of biological role, catalyzes the prenylation of para-hydroxybenzoate (PHB) with an all-trans polyprenyl group. Mediates the second step in the final reaction sequence of ubiquinone-8 (UQ-8) biosynthesis, which is the condensation of the polyisoprenoid side chain with PHB, generating the first membrane-bound Q intermediate 3-octaprenyl-4-hydroxybenzoate. The polypeptide is 4-hydroxybenzoate octaprenyltransferase (Burkholderia pseudomallei (strain 1106a)).